Consider the following 109-residue polypeptide: Spermidine export protein MdtI (109 aa).

Transmembrane regions (helical) follow at residues 6–26, 36–56, 64–84, and 88–108; these read WIHA…NVFL, WFGL…SQAV, AYAL…WVLF, and LNRK…MIKL.

This sequence belongs to the drug/metabolite transporter (DMT) superfamily. Small multidrug resistance (SMR) (TC 2.A.7.1) family. MdtI subfamily. Forms a complex with MdtJ.

The protein localises to the cell inner membrane. Catalyzes the excretion of spermidine. The sequence is that of Spermidine export protein MdtI from Enterobacter sp. (strain 638).